A 245-amino-acid polypeptide reads, in one-letter code: MKWKEQAIILGARQYGETSVILEVVTRQHGRYMGVVKGGRSRRMAALLQPGNFVEAEWWARLDEHLGLFKLEALDLCASRLMFLPEALYGLQLMASHFRLLPERDPHPILYDILHLFMQNFDEQFVNAELLVRFEMRLLEELGFGLDLSHCAVTGRQEKLYYVSPKSGRAVCEEVGLPWKNKLLLLPKFLIERTNRPVDFDDIRNGFTLTDFFLTRHVWEPRGIKQPSVRAILIQLFERRFHTKA.

This sequence belongs to the RecO family.

In terms of biological role, involved in DNA repair and RecF pathway recombination. The chain is DNA repair protein RecO from Bartonella bacilliformis (strain ATCC 35685 / KC583 / Herrer 020/F12,63).